The sequence spans 168 residues: Photosystem I assembly protein Ycf3 (168 aa).

TPR repeat units lie at residues 35-68 (AFTYYRDGMSAQSDGNYAEALQNYYEATRLEIDP), 72-105 (SYILYNIGLIHTSNGEHTKALEYYFRALERNPFL), and 120-153 (GEQAIRQGDSEIAEAWSDQAAEYWKQAIALTPGN).

Belongs to the Ycf3 family.

It is found in the plastid. The protein localises to the chloroplast thylakoid membrane. Essential for the assembly of the photosystem I (PSI) complex. May act as a chaperone-like factor to guide the assembly of the PSI subunits. In Chloranthus spicatus (Chulantree), this protein is Photosystem I assembly protein Ycf3.